A 496-amino-acid chain; its full sequence is UDP-N-acetylmuramoylalanine--D-glutamate ligase (496 aa).

Position 130–136 (130–136 (GTNGKTT)) interacts with ATP.

This sequence belongs to the MurCDEF family.

It localises to the cytoplasm. The catalysed reaction is UDP-N-acetyl-alpha-D-muramoyl-L-alanine + D-glutamate + ATP = UDP-N-acetyl-alpha-D-muramoyl-L-alanyl-D-glutamate + ADP + phosphate + H(+). It functions in the pathway cell wall biogenesis; peptidoglycan biosynthesis. Its function is as follows. Cell wall formation. Catalyzes the addition of glutamate to the nucleotide precursor UDP-N-acetylmuramoyl-L-alanine (UMA). The polypeptide is UDP-N-acetylmuramoylalanine--D-glutamate ligase (Mycobacterium bovis (strain ATCC BAA-935 / AF2122/97)).